A 949-amino-acid chain; its full sequence is Insulin receptor substrate 1 (949 aa).

The region spanning 8 to 109 (GMALSGYLKK…WLDKLLVLQR (102 aa)) is the PH domain. One can recognise an IRS-type PTB domain in the interval 122–236 (YDQVWQVVIQ…SAMSAKTESN (115 aa)). The tract at residues 247-270 (PDLSHEPMRKRSSSANEASKPINV) is disordered. 3 positions are modified to phosphoserine: Ser-286, Ser-287, and Ser-342. Positions 304–345 (RNGTLSESSNQTYFGSNHGLRSNTISGNRPHSTNKHSNSPTF) are enriched in polar residues. Residues 304 to 373 (RNGTLSESSN…SDDNGSYSHY (70 aa)) are disordered. Phosphotyrosine; by INSR is present on Tyr-410. A YXXM motif 1 motif is present at residues 410 to 413 (YIPM). Residues 530 to 556 (RSQSSITKEGSGYGTSGNRQKKSTSAP) form a disordered region. Ser-554 carries the post-translational modification Phosphoserine. Residues 640–643 (YLEM) carry the YXXM motif 2 motif. Basic and acidic residues predominate over residues 696–706 (REQTTSEEKKS). The interval 696–718 (REQTTSEEKKSNSPLNEKPFSLK) is disordered. Tyr-892 carries the phosphotyrosine; by INSR modification. Positions 906–949 (AKYLKRGSRESPPVSACPEDGNTYAKIDFDQSDSSSSSSNIFNT) are disordered. Phosphoserine occurs at positions 913 and 916. Tyr-929 bears the Phosphotyrosine; by INSR mark. Positions 937 to 949 (SDSSSSSSNIFNT) are enriched in low complexity.

Bindings to phosphatidylinositol 3-kinase and SHP2.

Activates phosphatidylinositol 3-kinase when bound to the regulatory p85 subunit. May mediate the control of various cellular processes by insulin-like peptides. When phosphorylated by the insulin receptor binds specifically to various cellular proteins containing SH2 domains. Involved in control of cell proliferation, cell size, and body and organ growth throughout development. Also has a role in a signaling pathway controlling the physiological response required to endure periods of low nutrient conditions. Insulin/insulin-like growth factor (IGF) signaling pathway has a role in regulating aging and is necessary in the ovary for vitellogenic maturation. The chain is Insulin receptor substrate 1 from Drosophila yakuba (Fruit fly).